The following is an 89-amino-acid chain: Small ribosomal subunit protein uS14A (89 aa).

The protein belongs to the universal ribosomal protein uS14 family. In terms of assembly, part of the 30S ribosomal subunit. Contacts proteins S3 and S10.

Binds 16S rRNA, required for the assembly of 30S particles and may also be responsible for determining the conformation of the 16S rRNA at the A site. This chain is Small ribosomal subunit protein uS14A, found in Listeria monocytogenes serovar 1/2a (strain ATCC BAA-679 / EGD-e).